Consider the following 122-residue polypeptide: Large ribosomal subunit protein bL12 (122 aa).

It belongs to the bacterial ribosomal protein bL12 family. Homodimer. Part of the ribosomal stalk of the 50S ribosomal subunit. Forms a multimeric L10(L12)X complex, where L10 forms an elongated spine to which 2 to 4 L12 dimers bind in a sequential fashion. Binds GTP-bound translation factors.

Forms part of the ribosomal stalk which helps the ribosome interact with GTP-bound translation factors. Is thus essential for accurate translation. The polypeptide is Large ribosomal subunit protein bL12 (Xylella fastidiosa (strain 9a5c)).